The following is a 538-amino-acid chain: Neutral protease B (538 aa).

Residues 1-28 (MRNLTKTSLLLAGLCTAAQMVFVTHASA) form the signal peptide. The propeptide at 29–223 (EESIEYDHTY…VIESFNAIHE (195 aa)) is activation peptide. Position 365 (Asp-365) interacts with Ca(2+). His-369 is a binding site for Zn(2+). Glu-370 is a catalytic residue. Residues His-373 and Glu-393 each contribute to the Zn(2+) site. Ca(2+) contacts are provided by Asp-404, Asp-406, Asp-407, Glu-409, Glu-412, Tyr-415, Thr-416, Ile-419, and Asp-422. The tract at residues 421 to 441 (GDSLRSLEDPSKQGNPDHYSN) is disordered. His-453 acts as the Proton donor in catalysis.

It belongs to the peptidase M4 family. Requires Zn(2+) as cofactor.

It is found in the secreted. With respect to regulation, protease activity can be inhibited in vitro by either a zinc specific chelator, 1,10-phenanthroline, or a metal chelator, EDTA. The enzyme is resistant to phenylmethylsulfonyl fluoride and iodoacetic acid. Its function is as follows. Protease able to cleave casein in vitro. This Bacillus subtilis (strain 168) protein is Neutral protease B.